Reading from the N-terminus, the 245-residue chain is MRVGVLGAKGKVGATMVRAVAAADDLTLSAELDAGDPLSLLTDGNTEVVIDFTHPDVVMGNLEFLIDNGIHAVVGTTGFTAERFQQVESWLVAKPNTSVLIAPNFAIGAVLSMHFAKQAARFFDSAEVIELHHPHKADAPSGTAARTAKLIAEARKGLPPNPDATSTSLPGARGADVDGIPVHAVRLAGLVAHQEVLFGTEGETLTIRHDSLDRTSFVPGVLLAVRRIAERPGLTVGLEPLLDLH.

NAD(+) contacts are provided by residues 7 to 12 (GAKGKV), 75 to 77 (GTT), and 102 to 105 (APNF). Histidine 132 (proton donor/acceptor) is an active-site residue. Histidine 133 is a (S)-2,3,4,5-tetrahydrodipicolinate binding site. Residue lysine 136 is the Proton donor of the active site. (S)-2,3,4,5-tetrahydrodipicolinate is bound at residue 142 to 143 (GT).

The protein belongs to the DapB family.

The protein resides in the cytoplasm. The catalysed reaction is (S)-2,3,4,5-tetrahydrodipicolinate + NAD(+) + H2O = (2S,4S)-4-hydroxy-2,3,4,5-tetrahydrodipicolinate + NADH + H(+). The enzyme catalyses (S)-2,3,4,5-tetrahydrodipicolinate + NADP(+) + H2O = (2S,4S)-4-hydroxy-2,3,4,5-tetrahydrodipicolinate + NADPH + H(+). It functions in the pathway amino-acid biosynthesis; L-lysine biosynthesis via DAP pathway; (S)-tetrahydrodipicolinate from L-aspartate: step 4/4. Its function is as follows. Catalyzes the conversion of 4-hydroxy-tetrahydrodipicolinate (HTPA) to tetrahydrodipicolinate. This is 4-hydroxy-tetrahydrodipicolinate reductase from Mycobacterium tuberculosis (strain ATCC 25177 / H37Ra).